The primary structure comprises 601 residues: UvrABC system protein C (601 aa).

The GIY-YIG domain maps to 17–95 (TLPGVYRMLD…IKALAPRYNI (79 aa)). A UVR domain is found at 204–239 (SELINELTRRMTAAAEAMAFEQAAELRDQIQALARV).

The protein belongs to the UvrC family. Interacts with UvrB in an incision complex.

It localises to the cytoplasm. Its function is as follows. The UvrABC repair system catalyzes the recognition and processing of DNA lesions. UvrC both incises the 5' and 3' sides of the lesion. The N-terminal half is responsible for the 3' incision and the C-terminal half is responsible for the 5' incision. The chain is UvrABC system protein C from Chromobacterium violaceum (strain ATCC 12472 / DSM 30191 / JCM 1249 / CCUG 213 / NBRC 12614 / NCIMB 9131 / NCTC 9757 / MK).